The following is a 316-amino-acid chain: Ribosomal protein L11 methyltransferase (316 aa).

S-adenosyl-L-methionine contacts are provided by T161, G182, D204, and N249.

Belongs to the methyltransferase superfamily. PrmA family.

The protein resides in the cytoplasm. It catalyses the reaction L-lysyl-[protein] + 3 S-adenosyl-L-methionine = N(6),N(6),N(6)-trimethyl-L-lysyl-[protein] + 3 S-adenosyl-L-homocysteine + 3 H(+). In terms of biological role, methylates ribosomal protein L11. In Ruminiclostridium cellulolyticum (strain ATCC 35319 / DSM 5812 / JCM 6584 / H10) (Clostridium cellulolyticum), this protein is Ribosomal protein L11 methyltransferase.